The following is a 453-amino-acid chain: Frizzled/smoothened-like sans CRD protein G (453 aa).

Residues 1–24 form the signal peptide; that stretch reads MIYILKNFIIILFFLLIILKRIES. Residues 25 to 89 are Extracellular-facing; sequence QSLPSLPSPT…PFFTLDEWNK (65 aa). 2 N-linked (GlcNAc...) asparagine glycosylation sites follow: asparagine 49 and asparagine 67. The helical transmembrane segment at 90–110 threads the bilayer; sequence FLYMSLVMGTISFLCGLFLLI. Topologically, residues 111 to 124 are cytoplasmic; it reads TYSPIVNKTHNRHT. Residues 125-145 form a helical membrane-spanning segment; the sequence is IGVMCMSFGVCLAMCSDMWNF. At 146–170 the chain is on the extracellular side; sequence GSNFTDQKSICPSPGQYLTTSNSRC. An N-linked (GlcNAc...) asparagine glycan is attached at asparagine 148. A helical transmembrane segment spans residues 171-191; sequence LGSGIVLQFGGVFGFLNWTLL. Residues 192-209 lie on the Cytoplasmic side of the membrane; that stretch reads SFDLFMNIKGIITKNYDK. A helical membrane pass occupies residues 210–230; the sequence is YYFVATFIIAIIFTFVPIVND. Over 231–250 the chain is Extracellular; the sequence is QYSMSYIGLGCWLGSAVYQL. A helical transmembrane segment spans residues 251 to 271; the sequence is IFFWILLSICLIVSSVFIILI. Over 272–296 the chain is Cytoplasmic; it reads LKEIYIIIKQSKQKTSLKGNIRPLL. A helical membrane pass occupies residues 297–317; that stretch reads CITVTSFAFFYMFFYYISIVI. Over 318–352 the chain is Extracellular; that stretch reads EGDYYERILNEYTDCLMDPTKDVSECKFPRMSVAN. The helical transmembrane segment at 353–373 threads the bilayer; that stretch reads EFVFLLCLRLLGIGAFIFYGI. Residues 374–453 are Cytoplasmic-facing; that stretch reads NKEVKKIWLN…DDNFKPIIIK (80 aa).

Belongs to the G-protein coupled receptor Fz/Smo family.

The protein localises to the membrane. This chain is Frizzled/smoothened-like sans CRD protein G (fscG), found in Dictyostelium discoideum (Social amoeba).